A 43-amino-acid chain; its full sequence is U5-hexatoxin-Mr1a (43 aa).

Cystine bridges form between C1-C16, C8-C21, C15-C36, and C17-C43.

It belongs to the neurotoxin 35 family. Contains 4 disulfide bonds. In terms of tissue distribution, expressed by the venom gland.

The protein resides in the secreted. Functionally, this toxin blocks the neuromuscular transmission, and also acts on muscle. It exerts an effect of first exciting and then inhibiting the contraction of muscle. This toxin is active only against mammals. This Macrothele raveni (Funnel-web spider) protein is U5-hexatoxin-Mr1a.